Consider the following 210-residue polypeptide: Secreted effector protein SteA (210 aa).

Its subcellular location is the secreted. The protein localises to the host cytoplasm. In terms of biological role, effector proteins function to alter host cell physiology and promote bacterial survival in host tissues. Could be required for passage of bacteria from the peritoneal cavity into the spleen, for survival and replication within host cells, or for avoiding host immune response. This Salmonella typhimurium (strain 14028s / SGSC 2262) protein is Secreted effector protein SteA (steA).